The sequence spans 695 residues: uncharacterized protein (695 aa).

This is an uncharacterized protein from Xanthomonas campestris pv. campestris (strain ATCC 33913 / DSM 3586 / NCPPB 528 / LMG 568 / P 25).